The sequence spans 386 residues: ABC transporter permease protein NatB (386 aa).

Helical transmembrane passes span Thr-19–Glu-39, Ala-172–Met-192, Trp-226–Leu-246, Ala-273–Met-293, Ala-300–Ser-320, and Ala-353–Ala-373.

As to quaternary structure, the complex is composed of NatA and NatB.

It is found in the cell membrane. The enzyme catalyses Na(+)(in) + ATP + H2O = Na(+)(out) + ADP + phosphate + H(+). Part of an ABC transporter that catalyzes ATP-dependent electrogenic sodium extrusion. The protein is ABC transporter permease protein NatB of Bacillus subtilis (strain 168).